Reading from the N-terminus, the 844-residue chain is SWI/SNF-related matrix-associated actin-dependent regulator of chromatin subfamily A containing DEAD/H box 1 homolog (844 aa).

The span at 1–23 (MSDSTVAASASASASSSAKSSLS) shows a compositional bias: low complexity. Disordered stretches follow at residues 1-75 (MSDS…TKLE) and 121-180 (NCKP…STKM). Positions 30-42 (INKNASSVVASPS) are enriched in polar residues. The Helicase ATP-binding domain occupies 301–471 (TVMHKQEMNG…ISLLCFVMPK (171 aa)). 314–321 (DEMGLGKT) contacts ATP. The DEGH box motif lies at 422 to 425 (DEAH). Residues 656-818 (YLDTLLPKLK…EQRCVVKLLT (163 aa)) form the Helicase C-terminal domain. Phosphoserine is present on residues Ser834, Ser838, and Ser841.

It belongs to the SNF2/RAD54 helicase family.

It localises to the nucleus. It catalyses the reaction ATP + H2O = ADP + phosphate + H(+). In terms of biological role, DNA helicase that possesses intrinsic ATP-dependent nucleosome-remodeling activity and is both required for DNA repair and heterochromatin organization. Promotes DNA end resection of double-strand breaks (DSBs) following DNA damage: probably acts by weakening histone DNA interactions in nucleosomes flanking DSBs. This chain is SWI/SNF-related matrix-associated actin-dependent regulator of chromatin subfamily A containing DEAD/H box 1 homolog (Etl1), found in Drosophila melanogaster (Fruit fly).